The sequence spans 297 residues: Inactive beta selinene synthase (297 aa).

This sequence belongs to the terpene synthase family. In terms of assembly, monomer.

It localises to the cytoplasm. Its function is as follows. Inactive selinene synthase. In Zea mays (Maize), this protein is Inactive beta selinene synthase.